The primary structure comprises 1009 residues: Cilia- and flagella-associated protein 70 (1009 aa).

Positions 410 to 428 (NLKEDKPVKEKDIDGRPRP) are enriched in basic and acidic residues. Positions 410-457 (NLKEDKPVKEKDIDGRPRPGDVQAPSIKSQSSDTPLEGEPPLSHNPEG) are disordered. 7 TPR repeats span residues 498-531 (PPLT…EYYR), 635-668 (SEQL…EPQN), 669-702 (LDHW…NQSH), 704-736 (HSLL…EPTN), 888-921 (HFIF…SPSC), 923-954 (TWLG…NNYN), and 956-988 (EVWA…KLKD).

This sequence belongs to the CFAP70 family.

It is found in the cell projection. The protein resides in the cilium. Its subcellular location is the flagellum. It localises to the cytoplasm. The protein localises to the cytoskeleton. It is found in the flagellum basal body. The protein resides in the cilium axoneme. In terms of biological role, axoneme-binding protein that plays a role in the regulation of ciliary motility and cilium length. This Macaca fascicularis (Crab-eating macaque) protein is Cilia- and flagella-associated protein 70.